A 141-amino-acid chain; its full sequence is Hemoglobin subunit alpha-D (141 aa).

The Globin domain occupies 1–141 (MLTAEDKKLI…VAAVLAEKYR (141 aa)). Residues His58 and His87 each coordinate heme b.

It belongs to the globin family. As to quaternary structure, heterotetramer of two alpha-D chains and two beta chains. As to expression, red blood cells.

Its function is as follows. Involved in oxygen transport from the lung to the various peripheral tissues. The sequence is that of Hemoglobin subunit alpha-D (HBAD) from Apus apus (Common swift).